A 282-amino-acid chain; its full sequence is Elongation factor Ts (282 aa).

Residues 80–83 (TDFV) are involved in Mg(2+) ion dislocation from EF-Tu.

The protein belongs to the EF-Ts family.

It is found in the cytoplasm. Functionally, associates with the EF-Tu.GDP complex and induces the exchange of GDP to GTP. It remains bound to the aminoacyl-tRNA.EF-Tu.GTP complex up to the GTP hydrolysis stage on the ribosome. The protein is Elongation factor Ts of Protochlamydia amoebophila (strain UWE25).